Consider the following 567-residue polypeptide: Low-affinity glucose transporter HXT3 (567 aa).

The span at M1–M29 shows a compositional bias: polar residues. Residues M1–N30 form a disordered region. Residues M1–G57 lie on the Cytoplasmic side of the membrane. S23 carries the post-translational modification Phosphoserine. Residues A58 to W78 form a helical membrane-spanning segment. The Extracellular portion of the chain corresponds to D79–G113. Residues L114–G134 form a helical membrane-spanning segment. The Cytoplasmic portion of the chain corresponds to D135–K140. A helical transmembrane segment spans residues M141–I161. Residues N162–R171 are Extracellular-facing. The chain crosses the membrane as a helical span at residues I172–V192. The Cytoplasmic segment spans residues A193–R198. The chain crosses the membrane as a helical span at residues G199–T219. At N220–R233 the chain is on the extracellular side. The N-linked (GlcNAc...) asparagine glycan is linked to N225. Residues V234 to P254 traverse the membrane as a helical segment. Residues E255–D337 are Cytoplasmic-facing. The chain crosses the membrane as a helical span at residues N338–S354. Residues D355–S360 lie on the Extracellular side of the membrane. A helical transmembrane segment spans residues I361–V378. Residues D379 to N385 are Cytoplasmic-facing. Residues C386 to V406 traverse the membrane as a helical segment. The Extracellular segment spans residues T407–V428. Residue N416 is glycosylated (N-linked (GlcNAc...) asparagine). Residues F429–I449 traverse the membrane as a helical segment. Residues S450–T466 are Cytoplasmic-facing. Residues A467 to I487 traverse the membrane as a helical segment. N488 is a topological domain (extracellular). Residues F489–F509 form a helical membrane-spanning segment. Residues V510 to K567 are Cytoplasmic-facing.

Belongs to the major facilitator superfamily. Sugar transporter (TC 2.A.1.1) family.

The protein localises to the membrane. In terms of biological role, low-affinity glucose transporter. The protein is Low-affinity glucose transporter HXT3 (HXT3) of Saccharomyces cerevisiae (strain ATCC 204508 / S288c) (Baker's yeast).